Reading from the N-terminus, the 586-residue chain is Dihydroxy-acid dehydratase 2 (586 aa).

Cys68 contributes to the [2Fe-2S] cluster binding site. Asp100 is a binding site for Mg(2+). Residue Cys141 participates in [2Fe-2S] cluster binding. Residues Asp142 and Lys143 each contribute to the Mg(2+) site. An N6-carboxylysine modification is found at Lys143. A [2Fe-2S] cluster-binding site is contributed by Cys213. A Mg(2+)-binding site is contributed by Glu463. Ser489 (proton acceptor) is an active-site residue.

It belongs to the IlvD/Edd family. In terms of assembly, homodimer. It depends on [2Fe-2S] cluster as a cofactor. The cofactor is Mg(2+).

The catalysed reaction is (2R)-2,3-dihydroxy-3-methylbutanoate = 3-methyl-2-oxobutanoate + H2O. The enzyme catalyses (2R,3R)-2,3-dihydroxy-3-methylpentanoate = (S)-3-methyl-2-oxopentanoate + H2O. Its pathway is amino-acid biosynthesis; L-isoleucine biosynthesis; L-isoleucine from 2-oxobutanoate: step 3/4. It participates in amino-acid biosynthesis; L-valine biosynthesis; L-valine from pyruvate: step 3/4. In terms of biological role, functions in the biosynthesis of branched-chain amino acids. Catalyzes the dehydration of (2R,3R)-2,3-dihydroxy-3-methylpentanoate (2,3-dihydroxy-3-methylvalerate) into 2-oxo-3-methylpentanoate (2-oxo-3-methylvalerate) and of (2R)-2,3-dihydroxy-3-methylbutanoate (2,3-dihydroxyisovalerate) into 2-oxo-3-methylbutanoate (2-oxoisovalerate), the penultimate precursor to L-isoleucine and L-valine, respectively. In Mesorhizobium japonicum (strain LMG 29417 / CECT 9101 / MAFF 303099) (Mesorhizobium loti (strain MAFF 303099)), this protein is Dihydroxy-acid dehydratase 2.